The chain runs to 100 residues: Large ribosomal subunit protein uL23 (100 aa).

It belongs to the universal ribosomal protein uL23 family. As to quaternary structure, part of the 50S ribosomal subunit. Contacts protein L29, and trigger factor when it is bound to the ribosome.

Functionally, one of the early assembly proteins it binds 23S rRNA. One of the proteins that surrounds the polypeptide exit tunnel on the outside of the ribosome. Forms the main docking site for trigger factor binding to the ribosome. The chain is Large ribosomal subunit protein uL23 from Synechococcus sp. (strain CC9311).